The sequence spans 189 residues: Ribosome maturation factor RimM (189 aa).

One can recognise a PRC barrel domain in the interval 118-189 (SGEYYWDDLI…IILVDWDENF (72 aa)).

This sequence belongs to the RimM family. As to quaternary structure, binds ribosomal protein uS19.

Its subcellular location is the cytoplasm. Its function is as follows. An accessory protein needed during the final step in the assembly of 30S ribosomal subunit, possibly for assembly of the head region. Essential for efficient processing of 16S rRNA. May be needed both before and after RbfA during the maturation of 16S rRNA. It has affinity for free ribosomal 30S subunits but not for 70S ribosomes. The chain is Ribosome maturation factor RimM from Ruthia magnifica subsp. Calyptogena magnifica.